A 623-amino-acid polypeptide reads, in one-letter code: Pentatricopeptide repeat-containing protein At5g15340, mitochondrial (623 aa).

The transit peptide at methionine 1–cysteine 16 directs the protein to the mitochondrion. PPR repeat units lie at residues arginine 42–serine 72, aspartate 75–isoleucine 109, aspartate 110–threonine 144, serine 145–serine 179, tryptophan 180–arginine 206, asparagine 207–arginine 237, asparagine 243–methionine 277, aspartate 285–threonine 319, tryptophan 320–glutamate 346, aspartate 350–proline 384, and lysine 385–valine 419. The type E motif stretch occupies residues valine 420–asparagine 495. Residues aspartate 496–arginine 526 form a type E(+) motif region. The type DYW motif stretch occupies residues serine 527–tryptophan 623.

This sequence belongs to the PPR family. PCMP-H subfamily.

It localises to the mitochondrion. This chain is Pentatricopeptide repeat-containing protein At5g15340, mitochondrial (PCMP-H91), found in Arabidopsis thaliana (Mouse-ear cress).